A 350-amino-acid polypeptide reads, in one-letter code: 2-oxoisovalerate dehydrogenase subunit beta (350 aa).

In terms of assembly, heterodimer of an alpha and a beta chain. The cofactor is thiamine diphosphate.

The enzyme catalyses N(6)-[(R)-lipoyl]-L-lysyl-[protein] + 3-methyl-2-oxobutanoate + H(+) = N(6)-[(R)-S(8)-2-methylpropanoyldihydrolipoyl]-L-lysyl-[protein] + CO2. Functionally, the branched-chain alpha-keto dehydrogenase complex catalyzes the overall conversion of alpha-keto acids to acyl-CoA and CO(2). It contains multiple copies of three enzymatic components: branched-chain alpha-keto acid decarboxylase (E1), lipoamide acyltransferase (E2) and lipoamide dehydrogenase (E3). This is 2-oxoisovalerate dehydrogenase subunit beta (bkdA2) from Pseudomonas aeruginosa (strain ATCC 15692 / DSM 22644 / CIP 104116 / JCM 14847 / LMG 12228 / 1C / PRS 101 / PAO1).